The sequence spans 784 residues: Probable phosphoketolase (784 aa).

Belongs to the XFP family. Thiamine diphosphate is required as a cofactor.

This chain is Probable phosphoketolase, found in Rhodopseudomonas palustris (strain BisB5).